The primary structure comprises 607 residues: Putative pentatricopeptide repeat-containing protein At1g09680 (607 aa).

PPR repeat units lie at residues 239–273 (NVYV…SLQP), 274–308 (TVVS…RTRP), 309–343 (DVFT…GLIP), 344–378 (NDVI…GLQP), 379–413 (DIVL…GLRP), 414–448 (DKIT…GIEL), 449–483 (DRVG…GIKP), 484–518 (DDVT…GHVP), and 519–553 (SVVT…GVVP).

Belongs to the PPR family. P subfamily.

This Arabidopsis thaliana (Mouse-ear cress) protein is Putative pentatricopeptide repeat-containing protein At1g09680.